Reading from the N-terminus, the 502-residue chain is MEEFQVYLELNRSRRHDFLYPLIFREYIYALAHDHGLNKSMIFLENQGYGNKFSSLIVKRLIIRMDQQNHLIISANDSNQNPFFGHNNNLYSQMISAGFAVIVEIPFSLRLLSYSQGEEVAKSHNLQSIHSIFPFLEDKFSHLNYALDVLIPHPIHLEILVQALRYWVKDASSLHLLRFSLYEYCNLKSFITPKKSISILNPRLFLFLYNSHACEYESIFLFLRNQSSHLRSTSSGVFLERIFFYGKIEYLVEVFYNDFQNNLWLFKDPFIHFIRYQGKAILASKDTSLLMNKWKYYFVDLWQYYFYMWSQSGRVRINQLSKYSLDFLGYLSSVRLNPSVVRSQMLENSFIIDNTMKKLDTRIPIISLIGSLSKAKFCNTLGHPISKPTWADSSDSDIIDRFVRICRNLSHYHSGSSKKKSLYRIKYILRFSCVKTLARKHKSTVRAFLKRLESEFLEEFFTEEEHVFSLIFPRVFFTSRKLYRGRIWYLDIICINALVNHE.

This sequence belongs to the intron maturase 2 family. MatK subfamily.

The protein resides in the plastid. The protein localises to the chloroplast. Usually encoded in the trnK tRNA gene intron. Probably assists in splicing its own and other chloroplast group II introns. This is Maturase K from Fremontodendron californicum (California flannelbush).